The chain runs to 529 residues: UDP-glucuronosyltransferase 2B9 (529 aa).

Residues 1–21 (MSVKWTSVILLIQLSFYFSSG) form the signal peptide. Residues Asn67, Asn68, and Asn88 are each glycosylated (N-linked (GlcNAc...) asparagine). A helical membrane pass occupies residues 494-514 (IGFLLACVATVIFVIMKCCLF).

This sequence belongs to the UDP-glycosyltransferase family.

It localises to the microsome membrane. It is found in the endoplasmic reticulum membrane. The enzyme catalyses glucuronate acceptor + UDP-alpha-D-glucuronate = acceptor beta-D-glucuronoside + UDP + H(+). Functionally, UDPGT is of major importance in the conjugation and subsequent elimination of potentially toxic xenobiotics and endogenous compounds. This isozyme is active on C18, C19, and C21 steroids, bile acids, and several xenobiotics including eugenol, 1-naphthol, and p-nitrophenol. The polypeptide is UDP-glucuronosyltransferase 2B9 (UGT2B9) (Macaca fascicularis (Crab-eating macaque)).